Here is a 447-residue protein sequence, read N- to C-terminus: Argininosuccinate synthase (447 aa).

ATP contacts are provided by residues 17 to 25 and A43; that span reads AFSGGLDTS. Y99 contacts L-citrulline. ATP-binding residues include G129 and T131. Residues T131, N135, and D136 each coordinate L-aspartate. An L-citrulline-binding site is contributed by N135. D136 lines the ATP pocket. Residues R139 and S192 each contribute to the L-citrulline site. D194 lines the ATP pocket. Residues T201, E203, and E280 each contribute to the L-citrulline site.

The protein belongs to the argininosuccinate synthase family. Type 2 subfamily. Homotetramer.

The protein resides in the cytoplasm. The catalysed reaction is L-citrulline + L-aspartate + ATP = 2-(N(omega)-L-arginino)succinate + AMP + diphosphate + H(+). The protein operates within amino-acid biosynthesis; L-arginine biosynthesis; L-arginine from L-ornithine and carbamoyl phosphate: step 2/3. The sequence is that of Argininosuccinate synthase from Klebsiella pneumoniae (strain 342).